The following is a 360-amino-acid chain: Photosystem II protein D1 2 (360 aa).

The next 3 membrane-spanning stretches (helical) occupy residues 29-46, 118-133, and 142-156; these read YIGWFGVLMVPTLLSATI, HFLIGIFAYLGREWEF, and WICVAYSAPVAAATA. H118 is a binding site for chlorophyll a. Y126 serves as a coordination point for pheophytin a. The [CaMn4O5] cluster site is built by D170 and E189. The helical transmembrane segment at 197–218 threads the bilayer; it reads LHMFGVAGVFGGSLFAAMHGSL. H198 lines the chlorophyll a pocket. A quinone contacts are provided by residues H215 and 264 to 265; that span reads SF. H215 contacts Fe cation. H272 lines the Fe cation pocket. The chain crosses the membrane as a helical span at residues 274–288; the sequence is FLAAWPVIGIWLTSL. The [CaMn4O5] cluster site is built by H332, E333, D342, and A344. A propeptide spanning residues 345 to 360 is cleaved from the precursor; it reads GTESAPVAFAAALGDG.

It belongs to the reaction center PufL/M/PsbA/D family. PSII is composed of 1 copy each of membrane proteins PsbA, PsbB, PsbC, PsbD, PsbE, PsbF, PsbH, PsbI, PsbJ, PsbK, PsbL, PsbM, PsbT, PsbX, Psb30/Ycf12, peripheral proteins PsbO, CyanoQ (PsbQ), PsbU, PsbV and a large number of cofactors. It forms dimeric complexes. The D1/D2 heterodimer binds P680, chlorophylls that are the primary electron donor of PSII, and subsequent electron acceptors. It shares a non-heme iron and each subunit binds pheophytin, quinone, additional chlorophylls, carotenoids and lipids. D1 provides most of the ligands for the Mn4-Ca-O5 cluster of the oxygen-evolving complex (OEC). There is also a Cl(-1) ion associated with D1 and D2, which is required for oxygen evolution. The PSII complex binds additional chlorophylls, carotenoids and specific lipids. is required as a cofactor. Post-translationally, tyr-161 forms a radical intermediate that is referred to as redox-active TyrZ, YZ or Y-Z. In terms of processing, C-terminally processed by CtpA; processing is essential to allow assembly of the oxygen-evolving complex and thus photosynthetic growth.

The protein localises to the cell inner membrane. It carries out the reaction 2 a plastoquinone + 4 hnu + 2 H2O = 2 a plastoquinol + O2. Functionally, photosystem II (PSII) is a light-driven water:plastoquinone oxidoreductase that uses light energy to abstract electrons from H(2)O, generating O(2) and a proton gradient subsequently used for ATP formation. It consists of a core antenna complex that captures photons, and an electron transfer chain that converts photonic excitation into a charge separation. The D1/D2 (PsbA/PsbD) reaction center heterodimer binds P680, the primary electron donor of PSII as well as several subsequent electron acceptors. This chain is Photosystem II protein D1 2, found in Gloeobacter violaceus (strain ATCC 29082 / PCC 7421).